We begin with the raw amino-acid sequence, 199 residues long: MSNLENLTSKIIEDANKEAEKLLSEAKKEENEIVDEKVKKANKAKEQIIEKTKREAKTKAERVISNTHLKVRNNKLEAKQEMINKVFDEAVIKLQNLPQEEYLNFIKNSILSLDIEGDEEIIVSSNDKDKIDISFMLTLNNKLKDKGKKELLKISNENRDIKGGFILYKNGIEINNSFEALVDSLRDELEQEIIEALFS.

The protein belongs to the V-ATPase E subunit family.

In terms of biological role, produces ATP from ADP in the presence of a proton gradient across the membrane. The sequence is that of V-type proton ATPase subunit E from Clostridium botulinum (strain Loch Maree / Type A3).